A 309-amino-acid chain; its full sequence is Homoserine O-succinyltransferase (309 aa).

Catalysis depends on C142, which acts as the Acyl-thioester intermediate. Residues K163 and S192 each coordinate substrate. H235 acts as the Proton acceptor in catalysis. E237 is a catalytic residue. R249 contributes to the substrate binding site.

Belongs to the MetA family.

The protein localises to the cytoplasm. The catalysed reaction is L-homoserine + succinyl-CoA = O-succinyl-L-homoserine + CoA. Its pathway is amino-acid biosynthesis; L-methionine biosynthesis via de novo pathway; O-succinyl-L-homoserine from L-homoserine: step 1/1. Transfers a succinyl group from succinyl-CoA to L-homoserine, forming succinyl-L-homoserine. This Klebsiella pneumoniae subsp. pneumoniae (strain ATCC 700721 / MGH 78578) protein is Homoserine O-succinyltransferase.